Here is a 445-residue protein sequence, read N- to C-terminus: Phosphoglucosamine mutase (445 aa).

Catalysis depends on Ser-101, which acts as the Phosphoserine intermediate. The Mg(2+) site is built by Ser-101, Asp-240, Asp-242, and Asp-244. Ser-101 is modified (phosphoserine).

This sequence belongs to the phosphohexose mutase family. It depends on Mg(2+) as a cofactor. In terms of processing, activated by phosphorylation.

The catalysed reaction is alpha-D-glucosamine 1-phosphate = D-glucosamine 6-phosphate. In terms of biological role, catalyzes the conversion of glucosamine-6-phosphate to glucosamine-1-phosphate. The polypeptide is Phosphoglucosamine mutase (Pseudomonas aeruginosa (strain UCBPP-PA14)).